The primary structure comprises 526 residues: Glucose-6-phosphate isomerase (526 aa).

Glu-323 (proton donor) is an active-site residue. Catalysis depends on residues His-352 and Lys-454.

Belongs to the GPI family.

The protein resides in the cytoplasm. The catalysed reaction is alpha-D-glucose 6-phosphate = beta-D-fructose 6-phosphate. It participates in carbohydrate biosynthesis; gluconeogenesis. Its pathway is carbohydrate degradation; glycolysis; D-glyceraldehyde 3-phosphate and glycerone phosphate from D-glucose: step 2/4. Functionally, catalyzes the reversible isomerization of glucose-6-phosphate to fructose-6-phosphate. The sequence is that of Glucose-6-phosphate isomerase from Prochlorococcus marinus subsp. pastoris (strain CCMP1986 / NIES-2087 / MED4).